A 330-amino-acid chain; its full sequence is AA9 family lytic polysaccharide monooxygenase E (330 aa).

The N-terminal stretch at 1–20 is a signal peptide; the sequence is MRSTLVTGLIAGLLSQQAAA. Cu(2+) is bound by residues H21 and H99. C58 and C193 are joined by a disulfide. O2 contacts are provided by H179 and Q188. Y190 provides a ligand contact to Cu(2+). One can recognise a CBM1 domain in the interval 293 to 330; that stretch reads CSVAKYQQCGGTGYTGCTSCASGSTCSAVSPPYYSQCV.

It belongs to the polysaccharide monooxygenase AA9 family. The cofactor is Cu(2+).

The protein resides in the secreted. It carries out the reaction [(1-&gt;4)-beta-D-glucosyl]n+m + reduced acceptor + O2 = 4-dehydro-beta-D-glucosyl-[(1-&gt;4)-beta-D-glucosyl]n-1 + [(1-&gt;4)-beta-D-glucosyl]m + acceptor + H2O.. In terms of biological role, lytic polysaccharide monooxygenase (LPMO) that depolymerizes crystalline and amorphous polysaccharides via the oxidation of scissile alpha- or beta-(1-4)-glycosidic bonds, yielding exclusively C1 oxidation products. Catalysis by LPMOs requires the reduction of the active-site copper from Cu(II) to Cu(I) by a reducing agent and H(2)O(2) or O(2) as a cosubstrate. The sequence is that of AA9 family lytic polysaccharide monooxygenase E (gh61-5) from Neurospora crassa (strain ATCC 24698 / 74-OR23-1A / CBS 708.71 / DSM 1257 / FGSC 987).